Consider the following 163-residue polypeptide: Putative 4-hydroxy-4-methyl-2-oxoglutarate aldolase (163 aa).

Substrate-binding positions include Gly76–Leu79 and Arg98. Asp99 serves as a coordination point for a divalent metal cation.

The protein belongs to the class II aldolase/RraA-like family. Homotrimer. A divalent metal cation serves as cofactor.

It carries out the reaction 4-hydroxy-4-methyl-2-oxoglutarate = 2 pyruvate. The enzyme catalyses oxaloacetate + H(+) = pyruvate + CO2. In terms of biological role, catalyzes the aldol cleavage of 4-hydroxy-4-methyl-2-oxoglutarate (HMG) into 2 molecules of pyruvate. Also contains a secondary oxaloacetate (OAA) decarboxylase activity due to the common pyruvate enolate transition state formed following C-C bond cleavage in the retro-aldol and decarboxylation reactions. This chain is Putative 4-hydroxy-4-methyl-2-oxoglutarate aldolase, found in Pseudomonas entomophila (strain L48).